The primary structure comprises 258 residues: Snake venom serine protease BPA (258 aa).

Positions 1–18 are cleaved as a signal peptide; that stretch reads MVLIRVIANLLILQLSNA. The propeptide occupies 19-24; that stretch reads QKSSEL. In terms of domain architecture, Peptidase S1 spans 25 to 249; the sequence is VIGGDECNIT…YLPWIQSIIA (225 aa). 6 cysteine pairs are disulfide-bonded: C31-C163, C50-C66, C98-C256, C142-C210, C174-C189, and C200-C225. 2 N-linked (GlcNAc...) asparagine glycosylation sites follow: N32 and N44. H65 functions as the Charge relay system in the catalytic mechanism. A glycan (N-linked (GlcNAc...) asparagine) is linked at N103. D110 (charge relay system) is an active-site residue. N121 carries N-linked (GlcNAc...) asparagine glycosylation. An O-linked (GalNAc...) serine glycan is attached at S133. N-linked (GlcNAc...) asparagine glycans are attached at residues N154 and N170. The active-site Charge relay system is the S204. 2 N-linked (GlcNAc...) asparagine glycosylation sites follow: N211 and N251. An O-linked (GalNAc...) threonine glycan is attached at T255.

It belongs to the peptidase S1 family. Snake venom subfamily. As to quaternary structure, monomer. N- and O-glycosylated. The glycosylation has a stabilizing effect on the protein. However, the removal of part of the carbohydrates enhances the proteolytic activity of the SVSP towards human and rat fibrinogen. Expressed by the venom gland.

It is found in the secreted. Its activity is regulated as follows. Inhibited by diisopropylfluorophosphate (DFP), but not by SBTI, Antithrombin III/heparin and BPTI, probably due to steric hindrance caused by its huge carbohydrate moietie. Its function is as follows. Snake venom serine protease that has a potent and selective fibrinogenolytic activity. Preferentially cleaves the alpha-chain (FGA) of human and rat fibrinogen at Arg-|-Gly bonds, and slowly digests the beta-chain (FGB). In vivo, completely avoids thrombus formation induced in rat, decreases the fibrinogen plasma level and prolonges the recalcification time. Possesses esterolytic and amidolytic activities. The polypeptide is Snake venom serine protease BPA (Bothrops jararaca (Jararaca)).